Reading from the N-terminus, the 136-residue chain is uncharacterized protein (136 aa).

This is an uncharacterized protein from Caenorhabditis elegans.